We begin with the raw amino-acid sequence, 1343 residues long: DNA-directed RNA polymerase subunit beta (1343 aa).

Belongs to the RNA polymerase beta chain family. In terms of assembly, the RNAP catalytic core consists of 2 alpha, 1 beta, 1 beta' and 1 omega subunit. When a sigma factor is associated with the core the holoenzyme is formed, which can initiate transcription.

It carries out the reaction RNA(n) + a ribonucleoside 5'-triphosphate = RNA(n+1) + diphosphate. In terms of biological role, DNA-dependent RNA polymerase catalyzes the transcription of DNA into RNA using the four ribonucleoside triphosphates as substrates. This chain is DNA-directed RNA polymerase subunit beta, found in Shewanella sediminis (strain HAW-EB3).